Here is a 180-residue protein sequence, read N- to C-terminus: Large ribosomal subunit protein uL16 (180 aa).

Belongs to the universal ribosomal protein uL16 family.

This Hyperthermus butylicus (strain DSM 5456 / JCM 9403 / PLM1-5) protein is Large ribosomal subunit protein uL16.